Here is a 125-residue protein sequence, read N- to C-terminus: Testis-specific protein LINC02914 (125 aa).

The segment covering 1-12 (MHRKEPGARLEA) has biased composition (basic and acidic residues). Residues 1 to 45 (MHRKEPGARLEATRGAARPHKQGTKPMITRPSVSQLGEGKCPSSQ) form a disordered region.

In terms of tissue distribution, expressed in testes and ejaculated spermatozoa (at protein level).

The protein resides in the cytoplasm. It is found in the nucleus. The protein localises to the cell projection. Its subcellular location is the cilium. It localises to the flagellum. Functionally, may play a role in the flagellum biology. The chain is Testis-specific protein LINC02914 from Homo sapiens (Human).